Consider the following 429-residue polypeptide: Cytochrome bc1 complex Rieske iron-sulfur subunit (429 aa).

The disordered stretch occupies residues 1–45; sequence MSRADDDAVGVPPTCGGRSDEEERRIVPGPNPQDGAKDGAKATAV. 3 consecutive transmembrane segments (helical) span residues 96–116, 137–157, and 207–227; these read VAVW…IFLF, PLYG…AVLY, and FGVG…GGLI. One can recognise a Rieske domain in the interval 316–410; that stretch reads RNPVMLIRIK…ITIDTDGYLV (95 aa). The [2Fe-2S] cluster site is built by Cys-353, His-355, Cys-372, and His-375. The cysteines at positions 358 and 374 are disulfide-linked.

The protein belongs to the Rieske iron-sulfur protein family. The cytochrome bc1 complex is composed of a cytochrome b (QcrB), the Rieske iron-sulfur protein (QcrA) and a diheme cytochrome c (QcrC) subunit. [2Fe-2S] cluster serves as cofactor.

The protein localises to the cell membrane. Its function is as follows. Iron-sulfur subunit of the cytochrome bc1 complex, an essential component of the respiratory electron transport chain required for ATP synthesis. The bc1 complex catalyzes the oxidation of menaquinol and the reduction of cytochrome c in the respiratory chain. The bc1 complex operates through a Q-cycle mechanism that couples electron transfer to generation of the proton gradient that drives ATP synthesis. The chain is Cytochrome bc1 complex Rieske iron-sulfur subunit (qcrA) from Mycobacterium bovis (strain ATCC BAA-935 / AF2122/97).